A 559-amino-acid polypeptide reads, in one-letter code: Heterochromatin protein 1-binding protein 3 (559 aa).

The segment at 1-132 (MATDLSEAEP…SKEKEKKVKK (132 aa)) is disordered. Composition is skewed to basic and acidic residues over residues 51–68 (TPPK…KADA) and 96–128 (EQPK…EKEK). H15 domains are found at residues 158–233 (SRPK…VVVS), 256–331 (QQVK…QLKK), and 339–414 (GGTL…QLCF). Residues 256–260 (QQVKL) carry the PxVxL motif motif. A disordered region spans residues 421–559 (DVLYPEKQQD…AMRKSLRAKK (139 aa)). Over residues 429–459 (QDEDSEESQEEEEEESEEEEESEEEESEEEE) the composition is skewed to acidic residues. Residues 463-515 (KKRMQKRPPPKSRSRAPPMKRRESKPKPRKTPAAHQGKAKPPPKVKTPVKKAK) show a composition bias toward basic residues. Over residues 516 to 533 (PAAPAIKKPSGGSSSKKP) the composition is skewed to low complexity. Positions 549–559 (SAMRKSLRAKK) are enriched in basic residues.

The protein resides in the nucleus. The protein localises to the chromosome. Functionally, component of heterochromatin that maintains heterochromatin integrity during G1/S progression and regulates the duration of G1 phase to critically influence cell proliferative capacity. The protein is Heterochromatin protein 1-binding protein 3 (HP1BP3) of Gallus gallus (Chicken).